The chain runs to 555 residues: Serine/threonine-protein kinase Nek4 (555 aa).

The region spanning 4–258 (YEVLEQIGKG…ANELLNHPHL (255 aa)) is the Protein kinase domain. Residues 10–18 (IGKGSFGSA) and lysine 33 each bind ATP. Aspartate 129 (proton acceptor) is an active-site residue. Disordered regions lie at residues 288–328 (LKER…MFNG), 346–372 (QRQEEAKKQSGAARTPRVAGTSAKAST), and 443–477 (NRETASRREVARHSFSSPPCPPHGEDNSNGSITKD). A compositionally biased stretch (polar residues) spans 304–320 (PSVSDTEAGSVSSSGKA).

It belongs to the protein kinase superfamily. NEK Ser/Thr protein kinase family. NIMA subfamily.

It carries out the reaction L-seryl-[protein] + ATP = O-phospho-L-seryl-[protein] + ADP + H(+). The enzyme catalyses L-threonyl-[protein] + ATP = O-phospho-L-threonyl-[protein] + ADP + H(+). Its function is as follows. May be involved in plant development processes. In Arabidopsis thaliana (Mouse-ear cress), this protein is Serine/threonine-protein kinase Nek4 (NEK4).